The chain runs to 417 residues: NADH-quinone oxidoreductase subunit D (417 aa).

The protein belongs to the complex I 49 kDa subunit family. In terms of assembly, NDH-1 is composed of 14 different subunits. Subunits NuoB, C, D, E, F, and G constitute the peripheral sector of the complex.

It localises to the cell inner membrane. It carries out the reaction a quinone + NADH + 5 H(+)(in) = a quinol + NAD(+) + 4 H(+)(out). NDH-1 shuttles electrons from NADH, via FMN and iron-sulfur (Fe-S) centers, to quinones in the respiratory chain. The immediate electron acceptor for the enzyme in this species is believed to be ubiquinone. Couples the redox reaction to proton translocation (for every two electrons transferred, four hydrogen ions are translocated across the cytoplasmic membrane), and thus conserves the redox energy in a proton gradient. This chain is NADH-quinone oxidoreductase subunit D, found in Halorhodospira halophila (strain DSM 244 / SL1) (Ectothiorhodospira halophila (strain DSM 244 / SL1)).